Reading from the N-terminus, the 230-residue chain is Protein-L-isoaspartate O-methyltransferase 1 (230 aa).

Ser-65 is a catalytic residue.

It belongs to the methyltransferase superfamily. L-isoaspartyl/D-aspartyl protein methyltransferase family. Monomer. Expressed in roots, rosette leaves, stems, cauline leaves, flowers and developing seeds.

The protein resides in the cytoplasm. The enzyme catalyses [protein]-L-isoaspartate + S-adenosyl-L-methionine = [protein]-L-isoaspartate alpha-methyl ester + S-adenosyl-L-homocysteine. Its function is as follows. Catalyzes the methyl esterification of L-isoaspartyl residues in peptides and proteins that result from spontaneous decomposition of normal L-aspartyl and L-asparaginyl residues. It plays a role in the repair and/or degradation of damaged proteins. Contributes to seed longevity and germination vigor by limiting the abnormal accumulation of the L-isoaspartyl residues in seed proteins. The protein is Protein-L-isoaspartate O-methyltransferase 1 (PIMT1) of Arabidopsis thaliana (Mouse-ear cress).